The following is a 606-amino-acid chain: Major centromere autoantigen B (606 aa).

Residue glycine 2 is modified to N,N,N-trimethylglycine. An HTH psq-type domain is found at 2–52; the sequence is GPKRRQLTFREKSRIIQEVEENPDLRKGEIARRFNIPPSTLSTILKNKRAI. 2 DNA-binding regions (H-T-H motif) span residues 28-48 and 97-129; these read KGEI…ILKN and GIIL…FRRR. The 72-residue stretch at 65–136 folds into the HTH CENPB-type domain; the sequence is CRKTNKLSPY…RRRHGVVACS (72 aa). The tract at residues 138 to 184 is disordered; sequence VTRSRARTSTPRAPAAPAGPAAVPSEGSGGSTPGWRTREEQPPSVAE. Residues 144 to 163 are compositionally biased toward low complexity; the sequence is RTSTPRAPAAPAGPAAVPSE. A Phosphoserine modification is found at serine 165. A Glycyl lysine isopeptide (Lys-Gly) (interchain with G-Cter in SUMO2) cross-link involves residue lysine 246. 2 disordered regions span residues 392–480 and 504–549; these read GLNA…LEAE and CPTL…VPVP. Residues threonine 396 and threonine 398 each carry the phosphothreonine modification. Composition is skewed to acidic residues over residues 405-480 and 512-545; these read GEEE…LEAE and GGED…DGDE. The segment at 543 to 606 is homodimerization; it reads GDEVPVPSFG…AGVRGLGHQS (64 aa).

As to quaternary structure, antiparallel homodimer. Interacts with CENPT. Identified in a centromere complex containing histones H2A, H2B and H4, and at least CENPA, CENPB, CENPC, CENPT, CENPN, HJURP, SUPT16H, SSRP1 and RSF1. Post-translationally, poly-ADP-ribosylated by PARP1. N-terminally methylated by METTL11A/NTM1. Alpha-N-methylation is stimulated in response to extracellular stimuli, including increased cell density and heat shock, and seems to facilitate binding to CENP-B boxes. Chromatin-bound CENP-B is primarily trimethylated.

The protein resides in the nucleus. The protein localises to the chromosome. Its subcellular location is the centromere. Its function is as follows. Interacts with centromeric heterochromatin in chromosomes and binds to a specific 17 bp subset of alphoid satellite DNA, called the CENP-B box. May organize arrays of centromere satellite DNA into a higher-order structure which then directs centromere formation and kinetochore assembly in mammalian chromosomes. In Cricetulus griseus (Chinese hamster), this protein is Major centromere autoantigen B (CENPB).